A 139-amino-acid chain; its full sequence is Large-conductance mechanosensitive channel (139 aa).

2 helical membrane-spanning segments follow: residues 16-36 (VIDLAVGVIIGAAFGKIVDSL) and 83-103 (GQFINTTIDFLIIAFAIFVAV).

This sequence belongs to the MscL family. Homopentamer.

The protein resides in the cell inner membrane. Functionally, channel that opens in response to stretch forces in the membrane lipid bilayer. May participate in the regulation of osmotic pressure changes within the cell. The chain is Large-conductance mechanosensitive channel from Aromatoleum aromaticum (strain DSM 19018 / LMG 30748 / EbN1) (Azoarcus sp. (strain EbN1)).